The primary structure comprises 221 residues: Toll/interleukin-1 receptor domain-containing adapter protein (221 aa).

The tract at residues 1–82 is disordered; sequence MASSTSLPAP…HASDSGSSRW (82 aa). Residues 48 to 67 show a composition bias toward low complexity; sequence SQPTSQDSPLPPSLSSVTSP. Residues 84–213 form the TIR domain; sequence KDYDVCVCHS…GGFRQVKEAV (130 aa). Disulfide bonds link cysteine 89/cysteine 134 and cysteine 142/cysteine 174.

In terms of assembly, homodimer. Also forms heterodimers with MYD88. May interact with PIK3AP1. Interacts with TLR4 and IRAK2 via their respective TIR domains. Interacts with BMX and TBK1. Interacts with EIF2AK2. Does not interact with IRAK1, nor TLR9. Interacts with TLR2. Interacts with RAGE/AGER. As to quaternary structure, (Microbial infection) In case of infection, interacts with B.melitensis protein TcpB (AC Q8YF53); TcpB abolishes the TLR4-TIRAP interaction and downstream signaling. In terms of processing, phosphorylated by IRAK1 and IRAK4. Also phosphorylated by BTK. Post-translationally, polyubiquitinated. Polyubiquitination follows phosphorylation by BTK and leads to TIRAP degradation. In terms of tissue distribution, highly expressed in liver, kidney, spleen, skeletal muscle and heart. Also detected in peripheral blood leukocytes, lung, placenta, small intestine, thymus, colon and brain.

It is found in the cytoplasm. It localises to the cell membrane. Its subcellular location is the membrane. Its function is as follows. Adapter involved in TLR2, TLR4 and RAGE signaling pathways in the innate immune response. Acts via IRAK2 and TRAF-6, leading to the activation of NF-kappa-B, MAPK1, MAPK3 and JNK, and resulting in cytokine secretion and the inflammatory response. Positively regulates the production of TNF-alpha (TNF) and interleukin-6 (IL6). The chain is Toll/interleukin-1 receptor domain-containing adapter protein (TIRAP) from Homo sapiens (Human).